Reading from the N-terminus, the 340-residue chain is Eukaryotic translation initiation factor 3 subunit I (340 aa).

WD repeat units lie at residues 8–47, 50–91, 150–189, 194–233, and 291–330; these read GHER…RLGT, GHQG…KVWD, CTES…QLEN, EFDH…ILKT, and GHFG…FDFM.

This sequence belongs to the eIF-3 subunit I family. In terms of assembly, component of the eukaryotic translation initiation factor 3 (eIF-3) complex.

Its subcellular location is the cytoplasm. Component of the eukaryotic translation initiation factor 3 (eIF-3) complex, which is involved in protein synthesis of a specialized repertoire of mRNAs and, together with other initiation factors, stimulates binding of mRNA and methionyl-tRNAi to the 40S ribosome. The eIF-3 complex specifically targets and initiates translation of a subset of mRNAs involved in cell proliferation. The sequence is that of Eukaryotic translation initiation factor 3 subunit I (tif34) from Neosartorya fischeri (strain ATCC 1020 / DSM 3700 / CBS 544.65 / FGSC A1164 / JCM 1740 / NRRL 181 / WB 181) (Aspergillus fischerianus).